Here is a 107-residue protein sequence, read N- to C-terminus: Urease subunit beta (107 aa).

This sequence belongs to the urease beta subunit family. As to quaternary structure, heterotrimer of UreA (gamma), UreB (beta) and UreC (alpha) subunits. Three heterotrimers associate to form the active enzyme.

Its subcellular location is the cytoplasm. The catalysed reaction is urea + 2 H2O + H(+) = hydrogencarbonate + 2 NH4(+). It functions in the pathway nitrogen metabolism; urea degradation; CO(2) and NH(3) from urea (urease route): step 1/1. The polypeptide is Urease subunit beta (Bacillus sp. (strain TB-90)).